Consider the following 330-residue polypeptide: MTLIVTGAAGFIGANIVKALNERGETRIIAVDNLTRADKFKNLVDCEIDDYLDKTEFVERFARGDFGKVRAVFHEGACSDTMETDGRYMMDNNFRYSRAVLDACLAQGAQFLYASSAAIYGGSTRFVEERSVEAPLNVYGYSKFLFDQVVRRVLPNAKSQIAGFRYFNVYGPRETHKGRMASVAFHNFNQFRAEGKVKLFGEYNGYAAGEQTRDFVSVEDVAKVNLFFFDHPEKSGIFNLGTGRAQPFNDIASTVVNTLRALDNLPPLTLAQQVEQGLIEYVPFPDALRGKYQCFTQADQTKLRAAGYDAPFLTVQEGVDRYVRWLSGQV.

NADP(+)-binding positions include 11 to 12, 32 to 33, Lys-39, Lys-54, 75 to 79, and Asn-92; these read FI, DN, and EGACS. The Proton acceptor role is filled by Tyr-139. Lys-143 lines the NADP(+) pocket. Substrate is bound at residue Asn-168. NADP(+)-binding residues include Val-169 and Lys-177. The active-site Proton acceptor is the Lys-177. Substrate is bound by residues Arg-179, His-186, 200–203, Arg-213, and Tyr-292; that span reads FGEY.

The protein belongs to the NAD(P)-dependent epimerase/dehydratase family. HldD subfamily. In terms of assembly, homopentamer. The cofactor is NADP(+).

The catalysed reaction is ADP-D-glycero-beta-D-manno-heptose = ADP-L-glycero-beta-D-manno-heptose. Its pathway is nucleotide-sugar biosynthesis; ADP-L-glycero-beta-D-manno-heptose biosynthesis; ADP-L-glycero-beta-D-manno-heptose from D-glycero-beta-D-manno-heptose 7-phosphate: step 4/4. Catalyzes the interconversion between ADP-D-glycero-beta-D-manno-heptose and ADP-L-glycero-beta-D-manno-heptose via an epimerization at carbon 6 of the heptose. This Burkholderia multivorans (strain ATCC 17616 / 249) protein is ADP-L-glycero-D-manno-heptose-6-epimerase.